The primary structure comprises 544 residues: Protein RDR1 (544 aa).

Residues 14–40 (CETCRELKRKCDGNQPCGACVRFEYDC) constitute a DNA-binding region (zn(2)-C6 fungal-type). Residues 50–71 (KRRKTVEQDKEAPLPSPPVHVD) are disordered.

The protein localises to the nucleus. May act as a transcriptional repressor of multidrug resistance genes. The protein is Protein RDR1 (RDR1) of Gibberella zeae (strain ATCC MYA-4620 / CBS 123657 / FGSC 9075 / NRRL 31084 / PH-1) (Wheat head blight fungus).